The following is a 287-amino-acid chain: X-box-binding protein 1 (287 aa).

Positions 61–117 (EEKMDRRKLKNRVAAQNARDKKKERSAKIEDVMRDLVEENRRLRAENERLRRQNKNL) constitute a bZIP domain. The tract at residues 63–87 (KMDRRKLKNRVAAQNARDKKKERSA) is disordered. The interval 63–88 (KMDRRKLKNRVAAQNARDKKKERSAK) is basic motif. The segment covering 78-87 (ARDKKKERSA) has biased composition (basic and acidic residues). The interval 89–117 (IEDVMRDLVEENRRLRAENERLRRQNKNL) is leucine-zipper.

Interacts with SUMO-conjugating enzyme ubc-9; the interaction is direct. Sumoylated. Sumoylation may negatively modulate the transcription of genes involved in the ER-stress-response.

The protein localises to the nucleus. Required for transcriptional regulation of the unfolded protein response (UPR) in the endoplasmic reticulum (ER) under stressed conditions, acting downstream of ire-1, and also maintaining ER homeostasis via a negative feedback loop, in parallel with ER kinase pek-1. May also regulate Golgi protein trafficking distal to the ER. Protects the host organism from the detrimental effects of mounting an innate immune response to microbes, such as the Gram-negative bacterium P.aeruginosa, probably by modulating the UPR. In terms of biological role, plays a role in the unconventional cytoplasmic splicing processing of its own mRNA triggered by the endoplasmic reticulum (ER) transmembrane endoribonuclease ire-1: upon ER stress, the emerging xbp-1 polypeptide chain, as part of a mRNA-ribosome-nascent chain (R-RNC) complex, cotranslationally recruits its own unprocessed mRNA through transient docking to the ER membrane and translational pausing, therefore facilitating efficient ire-1-mediated xbp-1 mRNA isoform 2 production. Its function is as follows. Functions as a stress-inducible potent transcriptional activator during endoplasmic reticulum (ER) stress by inducing unfolded protein response (UPR) target genes via binding to the UPR element (UPRE). Plays a role in modulation of the UPR, lipid metabolism, proteostasis, and lifespan. In neurons, rescues stress resistance, increases longevity, and, drives expression of lysosomal genes in the intestine and activates the UPR in distal, non-neuronal cell types through a cell-nonautonomous mechanism. In neurons or intestine, plays a role in protection against proteotoxicity, acting via positive modulation of genes involved in lysosomal function, including lipases and the fatty-acid desaturase fat-6. Protection against proteotoxicity in neurons is dependent upon the transcription factor atf-6. In Caenorhabditis elegans, this protein is X-box-binding protein 1.